A 463-amino-acid polypeptide reads, in one-letter code: NEDD8-activating enzyme E1 catalytic subunit (463 aa).

A2 is subject to N-acetylalanine. Positions 53–70 are interaction with UBE2M N-terminus; it reads HPDFEPSTESLQFLLDTC. ATP is bound by residues 100–124 and 148–171; these read DMDT…GRPK and IQDF…SIIA. Interaction with UBE2M N-terminus regions lie at residues 157-161 and 192-217; these read RQFHI and PSSI…LPGM. The interval 227-229 is interaction with NEDD8; the sequence is LYP. C237 functions as the Glycyl thioester intermediate in the catalytic mechanism. 2 interaction with NAE1 regions span residues 242-248 and 292-295; these read MPRLPEH and YNIR. The interaction with UBE2M N-terminus stretch occupies residues 331–338; the sequence is IATSAYIP. Residues 352 to 357 are interaction with NEDD8; the sequence is YTYTFE. The interval 368–463 is interaction with UBE2M core domain; sequence SQLPQNIQFS…TVLFKLHFTS (96 aa).

This sequence belongs to the ubiquitin-activating E1 family. UBA3 subfamily. Heterodimer of UBA3 and NAE1. Interacts with NEDD8, UBE2F and UBE2M. Binds ESR1 and ESR2 with bound steroid ligand. Interacts with TBATA. As to expression, ubiquitously expressed.

The catalysed reaction is ATP + [NEDD8 protein] + [E1 NEDD8-activating enzyme]-L-cysteine = AMP + diphosphate + [E1 NEDD8-activating enzyme]-S-[NEDD8 protein]-yl-L-cysteine.. It functions in the pathway protein modification; protein neddylation. Binding of TP53BP2 to the regulatory subunit NAE1 decreases activity. Its function is as follows. Catalytic subunit of the dimeric UBA3-NAE1 E1 enzyme. E1 activates NEDD8 by first adenylating its C-terminal glycine residue with ATP, thereafter linking this residue to the side chain of the catalytic cysteine, yielding a NEDD8-UBA3 thioester and free AMP. E1 finally transfers NEDD8 to the catalytic cysteine of UBE2M. Down-regulates steroid receptor activity. Necessary for cell cycle progression. The protein is NEDD8-activating enzyme E1 catalytic subunit (UBA3) of Homo sapiens (Human).